The sequence spans 325 residues: uncharacterized protein (325 aa).

2 coiled-coil regions span residues 38-69 (VHVA…QNQS) and 201-229 (ANTD…LEFK).

This is an uncharacterized protein from Acanthamoeba polyphaga (Amoeba).